The chain runs to 1744 residues: Retrotransposon-like protein 1 (1744 aa).

3 disordered regions span residues 1 to 416 (MIEP…SPEE), 823 to 859 (READ…DQSG), and 1287 to 1439 (SSET…EVPS). A compositionally biased stretch (low complexity) spans 19–30 (SSKQMESSEGSS). Positions 31 to 40 (NTVEETPGSS) are enriched in polar residues. The span at 41 to 80 (GAQAGAQAGAQAEAQAETQVEAQAEAQAEAQVEAQVEAQA) shows a compositional bias: low complexity. Residues 269–318 (DGSNQESSDGSNHELSNGSNHESSFGSNPESSDVSNLESSGGSNQESSDG) show a composition bias toward polar residues. The segment covering 332 to 361 (SDNSNQELSDNSNQESSDSSNQSSDISNQE) has biased composition (low complexity). Acidic residues-rich tracts occupy residues 385 to 407 (SDQD…GEEE), 837 to 846 (GSDDLSESEP), and 1291 to 1437 (EDKE…DEEV). 2 helical membrane passes run 1473 to 1493 (FFRG…LVML) and 1520 to 1540 (LILD…AQLL).

Expressed in placenta and in various tissues in late-fetal stage.

It localises to the membrane. Functionally, plays an essential role in capillaries endothelial cells for the maintenance of feto-maternal interface and for development of the placenta. This is Retrotransposon-like protein 1 (Rtl1) from Mus musculus (Mouse).